Here is a 618-residue protein sequence, read N- to C-terminus: Paraneoplastic antigen-like protein 5 (618 aa).

The span at 390 to 399 (AGEEGQRKES) shows a compositional bias: basic and acidic residues. Disordered regions lie at residues 390–409 (AGEEGQRKESGFWAESEPDE), 451–475 (RDTLTKSWGSPDKGTGDMSVAEGQQ), and 519–549 (SMITRPQGNPDRSWDTSGSQDGEDGCSELRM).

The protein belongs to the PNMA family. Restricted to testis, where expression is low. Not detected in the brain.

The protein localises to the nucleus. This chain is Paraneoplastic antigen-like protein 5 (Pnma5), found in Mus musculus (Mouse).